Consider the following 455-residue polypeptide: Glycosyl hydrolase family 109 protein (455 aa).

A signal peptide (tat-type signal) is located at residues 1–33 (MAGIDRRGFLKASMASVAAAALAGCASQQGTSA). Residues 62-63 (ER), D84, Q112, 133-136 (WALH), 153-154 (EV), and N182 each bind NAD(+). Substrate contacts are provided by residues Y211, R230, 242–245 (YPTH), and Y324. Y242 contributes to the NAD(+) binding site.

Belongs to the Gfo/Idh/MocA family. Glycosyl hydrolase 109 subfamily. NAD(+) serves as cofactor. Predicted to be exported by the Tat system. The position of the signal peptide cleavage has not been experimentally proven.

Functionally, glycosidase. The sequence is that of Glycosyl hydrolase family 109 protein from Shewanella amazonensis (strain ATCC BAA-1098 / SB2B).